A 471-amino-acid chain; its full sequence is Mitochondrial distribution and morphology protein 10 (471 aa).

Disordered regions lie at residues 272-291, 374-394, and 436-455; these read TEMP…SNHG, ADTP…DEEN, and SWAA…GGVS. Residues 276 to 288 show a composition bias toward low complexity; it reads SSSSSTSSTTTTS. The span at 444-455 shows a compositional bias: gly residues; that stretch reads AGGGQSVGGGVS.

The protein belongs to the MDM10 family. Component of the ER-mitochondria encounter structure (ERMES) or MDM complex, composed of mmm1, mdm10, mdm12 and mdm34. Associates with the mitochondrial outer membrane sorting assembly machinery SAM(core) complex.

It is found in the mitochondrion outer membrane. In terms of biological role, component of the ERMES/MDM complex, which serves as a molecular tether to connect the endoplasmic reticulum and mitochondria. Components of this complex are involved in the control of mitochondrial shape and protein biogenesis and may function in phospholipid exchange. mdm10 is involved in the late assembly steps of the general translocase of the mitochondrial outer membrane (TOM complex). Functions in the tom40-specific route of the assembly of outer membrane beta-barrel proteins, including the association of tom40 with the receptor tom22 and small TOM proteins. Can associate with the SAM(core) complex as well as the mdm12-mmm1 complex, both involved in late steps of the major beta-barrel assembly pathway, that is responsible for biogenesis of all outer membrane beta-barrel proteins. May act as a switch that shuttles between both complexes and channels precursor proteins into the tom40-specific pathway. Plays a role in mitochondrial morphology and in the inheritance of mitochondria. The sequence is that of Mitochondrial distribution and morphology protein 10 (mdmB) from Neosartorya fischeri (strain ATCC 1020 / DSM 3700 / CBS 544.65 / FGSC A1164 / JCM 1740 / NRRL 181 / WB 181) (Aspergillus fischerianus).